Reading from the N-terminus, the 441-residue chain is Amino-acid acetyltransferase (441 aa).

An N-acetyltransferase domain is found at 295-434 (EQVRRATIND…QELYNYQRRS (140 aa)).

The protein belongs to the acetyltransferase family. ArgA subfamily. As to quaternary structure, homohexamer.

It is found in the cytoplasm. It catalyses the reaction L-glutamate + acetyl-CoA = N-acetyl-L-glutamate + CoA + H(+). It functions in the pathway amino-acid biosynthesis; L-arginine biosynthesis; N(2)-acetyl-L-ornithine from L-glutamate: step 1/4. This is Amino-acid acetyltransferase from Yersinia pseudotuberculosis serotype O:1b (strain IP 31758).